Consider the following 180-residue polypeptide: Acireductone dioxygenase (180 aa).

4 residues coordinate Fe(2+): His99, His101, Glu105, and His145. 4 residues coordinate Ni(2+): His99, His101, Glu105, and His145.

This sequence belongs to the acireductone dioxygenase (ARD) family. Monomer. It depends on Fe(2+) as a cofactor. Requires Ni(2+) as cofactor.

It catalyses the reaction 1,2-dihydroxy-5-(methylsulfanyl)pent-1-en-3-one + O2 = 3-(methylsulfanyl)propanoate + CO + formate + 2 H(+). The enzyme catalyses 1,2-dihydroxy-5-(methylsulfanyl)pent-1-en-3-one + O2 = 4-methylsulfanyl-2-oxobutanoate + formate + 2 H(+). Its pathway is amino-acid biosynthesis; L-methionine biosynthesis via salvage pathway; L-methionine from S-methyl-5-thio-alpha-D-ribose 1-phosphate: step 5/6. Its function is as follows. Catalyzes 2 different reactions between oxygen and the acireductone 1,2-dihydroxy-3-keto-5-methylthiopentene (DHK-MTPene) depending upon the metal bound in the active site. Fe-containing acireductone dioxygenase (Fe-ARD) produces formate and 2-keto-4-methylthiobutyrate (KMTB), the alpha-ketoacid precursor of methionine in the methionine recycle pathway. Ni-containing acireductone dioxygenase (Ni-ARD) produces methylthiopropionate, carbon monoxide and formate, and does not lie on the methionine recycle pathway. The polypeptide is Acireductone dioxygenase (Geobacillus thermodenitrificans (strain NG80-2)).